Consider the following 325-residue polypeptide: HTH-type transcriptional regulator BbuR (325 aa).

The region spanning 15–72 (LDTDLLNVFCWVAKTQSFSRAAAELGTSQPVITRKIGRLEECLGVALFVRSNRGCVLT) is the HTH lysR-type domain. A DNA-binding region (H-T-H motif) is located at residues 32-51 (FSRAAAELGTSQPVITRKIG).

The protein belongs to the LysR transcriptional regulatory family.

The polypeptide is HTH-type transcriptional regulator BbuR (bbuR) (Bordetella bronchiseptica (strain ATCC BAA-588 / NCTC 13252 / RB50) (Alcaligenes bronchisepticus)).